Here is a 190-residue protein sequence, read N- to C-terminus: Peptidyl-tRNA hydrolase (190 aa).

Y18 contacts tRNA. H23 (proton acceptor) is an active-site residue. Residues F69, N71, and N117 each contribute to the tRNA site.

This sequence belongs to the PTH family. As to quaternary structure, monomer.

Its subcellular location is the cytoplasm. The catalysed reaction is an N-acyl-L-alpha-aminoacyl-tRNA + H2O = an N-acyl-L-amino acid + a tRNA + H(+). Its function is as follows. Hydrolyzes ribosome-free peptidyl-tRNAs (with 1 or more amino acids incorporated), which drop off the ribosome during protein synthesis, or as a result of ribosome stalling. In terms of biological role, catalyzes the release of premature peptidyl moieties from peptidyl-tRNA molecules trapped in stalled 50S ribosomal subunits, and thus maintains levels of free tRNAs and 50S ribosomes. This is Peptidyl-tRNA hydrolase from Rhodococcus jostii (strain RHA1).